Reading from the N-terminus, the 428-residue chain is Tyrosine--tRNA ligase (428 aa).

Y41 contributes to the L-tyrosine binding site. A 'HIGH' region motif is present at residues 46–55 (PTADSLHLGH). Residues Y179 and Q183 each coordinate L-tyrosine. The 'KMSKS' region motif lies at 239–243 (KFGKT). An ATP-binding site is contributed by K242. An S4 RNA-binding domain is found at 361–418 (ADLMQALVDSELQPSRGQARKTIASNAITINGEKQSDPEYTFSDSDRLFGRYTLLRRG).

This sequence belongs to the class-I aminoacyl-tRNA synthetase family. TyrS type 1 subfamily. Homodimer.

It localises to the cytoplasm. It carries out the reaction tRNA(Tyr) + L-tyrosine + ATP = L-tyrosyl-tRNA(Tyr) + AMP + diphosphate + H(+). In terms of biological role, catalyzes the attachment of tyrosine to tRNA(Tyr) in a two-step reaction: tyrosine is first activated by ATP to form Tyr-AMP and then transferred to the acceptor end of tRNA(Tyr). This is Tyrosine--tRNA ligase from Cronobacter sakazakii (strain ATCC BAA-894) (Enterobacter sakazakii).